We begin with the raw amino-acid sequence, 328 residues long: Biotin synthase (328 aa).

The Radical SAM core domain occupies 43 to 272 (NVVQKASLLS…KSTVRLSAGR (230 aa)). Residues C58, C62, and C65 each contribute to the [4Fe-4S] cluster site. Positions 103, 135, 195, and 267 each coordinate [2Fe-2S] cluster.

It belongs to the radical SAM superfamily. Biotin synthase family. In terms of assembly, homodimer. Requires [4Fe-4S] cluster as cofactor. It depends on [2Fe-2S] cluster as a cofactor.

The catalysed reaction is (4R,5S)-dethiobiotin + (sulfur carrier)-SH + 2 reduced [2Fe-2S]-[ferredoxin] + 2 S-adenosyl-L-methionine = (sulfur carrier)-H + biotin + 2 5'-deoxyadenosine + 2 L-methionine + 2 oxidized [2Fe-2S]-[ferredoxin]. It functions in the pathway cofactor biosynthesis; biotin biosynthesis; biotin from 7,8-diaminononanoate: step 2/2. Its function is as follows. Catalyzes the conversion of dethiobiotin (DTB) to biotin by the insertion of a sulfur atom into dethiobiotin via a radical-based mechanism. The sequence is that of Biotin synthase from Allorhizobium ampelinum (strain ATCC BAA-846 / DSM 112012 / S4) (Agrobacterium vitis (strain S4)).